The primary structure comprises 256 residues: Small ribosomal subunit protein eS1 (256 aa).

Positions 1-18 are enriched in basic residues; the sequence is MAVGKNKRLSKGKKGLKK. The segment at 1–20 is disordered; sequence MAVGKNKRLSKGKKGLKKRT. Ala-2 bears the N-acetylalanine; partial mark.

Belongs to the eukaryotic ribosomal protein eS1 family. Component of the small ribosomal subunit. Mature ribosomes consist of a small (40S) and a large (60S) subunit. The 40S subunit contains about 33 different proteins and 1 molecule of RNA (18S). The 60S subunit contains about 49 different proteins and 3 molecules of RNA (25S, 5.8S and 5S).

Its subcellular location is the cytoplasm. This is Small ribosomal subunit protein eS1 (rps1) from Talaromyces marneffei (strain ATCC 18224 / CBS 334.59 / QM 7333) (Penicillium marneffei).